We begin with the raw amino-acid sequence, 522 residues long: Glutamyl-tRNA(Gln) amidotransferase subunit A (522 aa).

Catalysis depends on charge relay system residues lysine 88 and serine 163. The active-site Acyl-ester intermediate is serine 187.

Belongs to the amidase family. GatA subfamily. As to quaternary structure, heterotrimer of A, B and C subunits.

The enzyme catalyses L-glutamyl-tRNA(Gln) + L-glutamine + ATP + H2O = L-glutaminyl-tRNA(Gln) + L-glutamate + ADP + phosphate + H(+). Functionally, allows the formation of correctly charged Gln-tRNA(Gln) through the transamidation of misacylated Glu-tRNA(Gln) in organisms which lack glutaminyl-tRNA synthetase. The reaction takes place in the presence of glutamine and ATP through an activated gamma-phospho-Glu-tRNA(Gln). The protein is Glutamyl-tRNA(Gln) amidotransferase subunit A of Paenarthrobacter aurescens (strain TC1).